Reading from the N-terminus, the 301-residue chain is Indole-3-glycerol phosphate synthase (301 aa).

The protein belongs to the TrpC family.

The enzyme catalyses 1-(2-carboxyphenylamino)-1-deoxy-D-ribulose 5-phosphate + H(+) = (1S,2R)-1-C-(indol-3-yl)glycerol 3-phosphate + CO2 + H2O. It participates in amino-acid biosynthesis; L-tryptophan biosynthesis; L-tryptophan from chorismate: step 4/5. In Prochlorococcus marinus (strain MIT 9313), this protein is Indole-3-glycerol phosphate synthase.